The sequence spans 120 residues: Ribosome-binding factor A (120 aa).

This sequence belongs to the RbfA family. In terms of assembly, monomer. Binds 30S ribosomal subunits, but not 50S ribosomal subunits or 70S ribosomes.

It is found in the cytoplasm. In terms of biological role, one of several proteins that assist in the late maturation steps of the functional core of the 30S ribosomal subunit. Associates with free 30S ribosomal subunits (but not with 30S subunits that are part of 70S ribosomes or polysomes). Required for efficient processing of 16S rRNA. May interact with the 5'-terminal helix region of 16S rRNA. The polypeptide is Ribosome-binding factor A (Lactobacillus delbrueckii subsp. bulgaricus (strain ATCC 11842 / DSM 20081 / BCRC 10696 / JCM 1002 / NBRC 13953 / NCIMB 11778 / NCTC 12712 / WDCM 00102 / Lb 14)).